Here is a 310-residue protein sequence, read N- to C-terminus: Translocator protein BipD (310 aa).

Coiled-coil stretches lie at residues 127 to 171 (DPIL…LQDY) and 250 to 299 (DTAR…AIST).

The protein belongs to the invasin protein D family.

The protein localises to the secreted. In terms of biological role, required for invasion of epithelial cells, as well as for survival within host cells, escape from endocytic vesicles and subsequent actin-tail formation. Probably regulates the secretion of effectors BipB and BipC and their final integration into the target cell membrane. The chain is Translocator protein BipD (bipD) from Burkholderia thailandensis (strain ATCC 700388 / DSM 13276 / CCUG 48851 / CIP 106301 / E264).